A 174-amino-acid chain; its full sequence is Streptothricin acetyltransferase (174 aa).

The 151-residue stretch at 20-170 folds into the N-acetyltransferase domain; that stretch reads FIVREVFDVH…AMYWYWFSGA (151 aa).

It belongs to the acetyltransferase family. GNAT subfamily.

The catalysed reaction is streptothricin F + acetyl-CoA = N(beta)-acetylstreptothricin F + CoA + H(+). Its function is as follows. Involved in resistance to streptothricin, a broad-spectrum antibiotic produced by streptomycetes. Detoxifies streptothricin via acetylation of the beta amino group of the first beta-lysyl moiety of streptothricin. The protein is Streptothricin acetyltransferase (sat-1) of Escherichia coli.